A 212-amino-acid polypeptide reads, in one-letter code: Pyridoxine/pyridoxamine 5'-phosphate oxidase (212 aa).

Substrate contacts are provided by residues 8–11 (RREY) and K66. Residues 61-66 (RIVLLK), 76-77 (FT), R82, K83, and Q105 contribute to the FMN site. Residues Y123, R127, and S131 each contribute to the substrate site. Residues 140 to 141 (QS) and W185 each bind FMN. 191-193 (RLH) provides a ligand contact to substrate. R195 contacts FMN.

This sequence belongs to the pyridoxamine 5'-phosphate oxidase family. As to quaternary structure, homodimer. FMN is required as a cofactor.

The catalysed reaction is pyridoxamine 5'-phosphate + O2 + H2O = pyridoxal 5'-phosphate + H2O2 + NH4(+). The enzyme catalyses pyridoxine 5'-phosphate + O2 = pyridoxal 5'-phosphate + H2O2. It functions in the pathway cofactor metabolism; pyridoxal 5'-phosphate salvage; pyridoxal 5'-phosphate from pyridoxamine 5'-phosphate: step 1/1. The protein operates within cofactor metabolism; pyridoxal 5'-phosphate salvage; pyridoxal 5'-phosphate from pyridoxine 5'-phosphate: step 1/1. Catalyzes the oxidation of either pyridoxine 5'-phosphate (PNP) or pyridoxamine 5'-phosphate (PMP) into pyridoxal 5'-phosphate (PLP). The sequence is that of Pyridoxine/pyridoxamine 5'-phosphate oxidase from Shewanella sp. (strain MR-4).